Reading from the N-terminus, the 66-residue chain is ATP synthase F(0) complex subunit 8 (66 aa).

The residue at position 1 (M1) is an N-formylmethionine. A helical transmembrane segment spans residues 8 to 24 (TWLTMILSMFLTLFIIF). K54 is subject to N6-acetyllysine; alternate. K54 is subject to N6-succinyllysine; alternate. The residue at position 57 (K57) is an N6-acetyllysine.

The protein belongs to the ATPase protein 8 family. In terms of assembly, component of the ATP synthase complex composed at least of ATP5F1A/subunit alpha, ATP5F1B/subunit beta, ATP5MC1/subunit c (homooctomer), MT-ATP6/subunit a, MT-ATP8/subunit 8, ATP5ME/subunit e, ATP5MF/subunit f, ATP5MG/subunit g, ATP5MK/subunit k, ATP5MJ/subunit j, ATP5F1C/subunit gamma, ATP5F1D/subunit delta, ATP5F1E/subunit epsilon, ATP5PF/subunit F6, ATP5PB/subunit b, ATP5PD/subunit d, ATP5PO/subunit OSCP. ATP synthase complex consists of a soluble F(1) head domain (subunits alpha(3) and beta(3)) - the catalytic core - and a membrane F(0) domain - the membrane proton channel (subunits c, a, 8, e, f, g, k and j). These two domains are linked by a central stalk (subunits gamma, delta, and epsilon) rotating inside the F1 region and a stationary peripheral stalk (subunits F6, b, d, and OSCP). Interacts with PRICKLE3.

The protein resides in the mitochondrion membrane. Functionally, subunit 8, of the mitochondrial membrane ATP synthase complex (F(1)F(0) ATP synthase or Complex V) that produces ATP from ADP in the presence of a proton gradient across the membrane which is generated by electron transport complexes of the respiratory chain. ATP synthase complex consist of a soluble F(1) head domain - the catalytic core - and a membrane F(1) domain - the membrane proton channel. These two domains are linked by a central stalk rotating inside the F(1) region and a stationary peripheral stalk. During catalysis, ATP synthesis in the catalytic domain of F(1) is coupled via a rotary mechanism of the central stalk subunits to proton translocation. In vivo, can only synthesize ATP although its ATP hydrolase activity can be activated artificially in vitro. Part of the complex F(0) domain. The protein is ATP synthase F(0) complex subunit 8 of Bos taurus (Bovine).